A 265-amino-acid polypeptide reads, in one-letter code: MSRIQKTFAALAAQQKKGLIPFITAGDPEPGLTVALMHALVAGGADVIELGVPFSDPMADGPVIQRASERALAQGVSLTQVLQWVREFRQTNTDTPVVLMGYANPIERMGEAAFAAAASAAGVDGVLVVDYPPEECESFAGLMRDHGMDPIFLLAPTSTDARIEAVAKVASGYLYYVSLKGVTGSASIDLDSVAARLPLIKQHANLPVGVGFGIRDAQTARAIGSVADAVVIGSRLVQLLEDTPREQAVTALQSFIAEIRQALDA.

Residues Glu-49 and Asp-60 each act as proton acceptor in the active site.

It belongs to the TrpA family. As to quaternary structure, tetramer of two alpha and two beta chains.

It carries out the reaction (1S,2R)-1-C-(indol-3-yl)glycerol 3-phosphate + L-serine = D-glyceraldehyde 3-phosphate + L-tryptophan + H2O. It participates in amino-acid biosynthesis; L-tryptophan biosynthesis; L-tryptophan from chorismate: step 5/5. The alpha subunit is responsible for the aldol cleavage of indoleglycerol phosphate to indole and glyceraldehyde 3-phosphate. In Cupriavidus taiwanensis (strain DSM 17343 / BCRC 17206 / CCUG 44338 / CIP 107171 / LMG 19424 / R1) (Ralstonia taiwanensis (strain LMG 19424)), this protein is Tryptophan synthase alpha chain.